We begin with the raw amino-acid sequence, 259 residues long: ATP synthase subunit a 1 (259 aa).

5 consecutive transmembrane segments (helical) span residues 30–50 (TLHVDTLFFSVFLGAVFLFFF), 90–110 (LIAPLALSIFAWVFLMNAMDL), 135–155 (DLNATFGMSISVFFLIIFYSL), 209–229 (LIFILIALLPWWVQPALSFPW), and 230–250 (AVFHILIITLQAFIFMVLTIV).

Belongs to the ATPase A chain family. In terms of assembly, F-type ATPases have 2 components, CF(1) - the catalytic core - and CF(0) - the membrane proton channel. CF(1) has five subunits: alpha(3), beta(3), gamma(1), delta(1), epsilon(1). CF(0) has three main subunits: a(1), b(2) and c(9-12). The alpha and beta chains form an alternating ring which encloses part of the gamma chain. CF(1) is attached to CF(0) by a central stalk formed by the gamma and epsilon chains, while a peripheral stalk is formed by the delta and b chains.

The protein resides in the cell inner membrane. Key component of the proton channel; it plays a direct role in the translocation of protons across the membrane. This is ATP synthase subunit a 1 from Methylococcus capsulatus (strain ATCC 33009 / NCIMB 11132 / Bath).